A 668-amino-acid polypeptide reads, in one-letter code: UvrABC system protein C (668 aa).

One can recognise a GIY-YIG domain in the interval 14-91; it reads DSPGCYLHKD…IQRYKPKYNI (78 aa). The UVR domain maps to 196-231; the sequence is KKIVNELEAKMMVSSDNMEFEQAAEYRDVIKAIGTL.

This sequence belongs to the UvrC family. In terms of assembly, interacts with UvrB in an incision complex.

The protein resides in the cytoplasm. Functionally, the UvrABC repair system catalyzes the recognition and processing of DNA lesions. UvrC both incises the 5' and 3' sides of the lesion. The N-terminal half is responsible for the 3' incision and the C-terminal half is responsible for the 5' incision. In Lactococcus lactis subsp. lactis (strain IL1403) (Streptococcus lactis), this protein is UvrABC system protein C.